The following is a 136-amino-acid chain: Small ribosomal subunit protein bS16 (136 aa).

Residues 114-123 (TLKARRRRAK) show a composition bias toward basic residues. The tract at residues 114-136 (TLKARRRRAKKEAEAASASSAEG) is disordered.

It belongs to the bacterial ribosomal protein bS16 family.

The polypeptide is Small ribosomal subunit protein bS16 (Chlorobium chlorochromatii (strain CaD3)).